Here is a 443-residue protein sequence, read N- to C-terminus: Glutamate-1-semialdehyde 2,1-aminomutase (443 aa).

Positions 1-16 (MSVNADSQHSNNSSHQ) are enriched in low complexity. A disordered region spans residues 1–22 (MSVNADSQHSNNSSHQASEKAF). Position 277 is an N6-(pyridoxal phosphate)lysine (lysine 277).

It belongs to the class-III pyridoxal-phosphate-dependent aminotransferase family. HemL subfamily. Homodimer. Pyridoxal 5'-phosphate serves as cofactor.

The protein resides in the cytoplasm. It carries out the reaction (S)-4-amino-5-oxopentanoate = 5-aminolevulinate. The protein operates within porphyrin-containing compound metabolism; protoporphyrin-IX biosynthesis; 5-aminolevulinate from L-glutamyl-tRNA(Glu): step 2/2. The sequence is that of Glutamate-1-semialdehyde 2,1-aminomutase from Corynebacterium jeikeium (strain K411).